We begin with the raw amino-acid sequence, 318 residues long: Olfactory receptor 13C2 (318 aa).

Over 1–25 the chain is Extracellular; that stretch reads MEWENHTILVEFFLKGLSGHPRLEL. N-linked (GlcNAc...) asparagine glycosylation occurs at Asn-5. A helical membrane pass occupies residues 26 to 46; the sequence is LFFVLIFIMYVVILLGNGTLI. Topologically, residues 47-54 are cytoplasmic; that stretch reads LISILDPH. A helical transmembrane segment spans residues 55-75; the sequence is LHTPMYFFLGNLSFLDICYTT. The Extracellular segment spans residues 76 to 99; that stretch reads TSIPSTLVSFLSERKTISLSGCAV. Residues Cys-97 and Cys-189 are joined by a disulfide bond. The chain crosses the membrane as a helical span at residues 100–120; the sequence is QMFLGLAMGTTECVLLGMMAF. Over 121-139 the chain is Cytoplasmic; the sequence is DRYVAICNPLRYPIIMSKD. A helical membrane pass occupies residues 140-160; it reads AYVPMAAGSWIIGAVNSAVQS. Topologically, residues 161–197 are extracellular; it reads VFVVQLPFCRNNIINHFTCEILAVMKLACADISDNEF. The chain crosses the membrane as a helical span at residues 198-217; that stretch reads IMLVATTLFILTPLLLIIVS. Topologically, residues 218-237 are cytoplasmic; the sequence is YTLIIVSIFKISSSEGRSKA. The chain crosses the membrane as a helical span at residues 238 to 258; it reads SSTCSAHLTVVIIFYGTILFM. Residues 259 to 277 are Extracellular-facing; sequence YMKPKSKETLNSDDLDATD. The chain crosses the membrane as a helical span at residues 278 to 298; that stretch reads KIISMFYGVMTPMMNPLIYSL. Topologically, residues 299-318 are cytoplasmic; that stretch reads RNKDVKEAVKHLLNRRFFSK.

The protein belongs to the G-protein coupled receptor 1 family.

Its subcellular location is the cell membrane. Odorant receptor. The polypeptide is Olfactory receptor 13C2 (OR13C2) (Homo sapiens (Human)).